Consider the following 325-residue polypeptide: MKIFDYEDIQLIPNKCIVESRSECDTTIQFGPKKFKLPVVPANMQTVMNEKLAKWFAENDYFYIMHRFDEEARIPFIKHMQNSGLFASISVGVKKAEFDFIEKLAQEKLIPEYITIDIAHGHSDSVINMIKHIKTHIPDSFVIAGNVGTPEGVRELENAGADATKVGIGPGRVCITKIKTGFGTGGWQLAALNICSKAARKPLIADGGIRTHGDIAKSIRFGASMVMIGSLFAAHEESPGETVELDGKQYKEYFGSASEFQKGEHKNVEGKKMFVEHKGSLMDTLKEMQQDLQSSISYAGGKDLKSLRTVDYVIVRNSIFNGDRD.

Cysteine 174 acts as the Thioimidate intermediate in catalysis. NADP(+) is bound at residue leucine 203–valine 226.

This sequence belongs to the IMPDH/GMPR family. GuaC type 2 subfamily.

It catalyses the reaction IMP + NH4(+) + NADP(+) = GMP + NADPH + 2 H(+). Catalyzes the irreversible NADPH-dependent deamination of GMP to IMP. It functions in the conversion of nucleobase, nucleoside and nucleotide derivatives of G to A nucleotides, and in maintaining the intracellular balance of A and G nucleotides. In Staphylococcus aureus (strain NCTC 8325 / PS 47), this protein is GMP reductase.